A 78-amino-acid chain; its full sequence is MQTAYWMMVMMMVWITAPLSEGGQLNDVIRGLVPDNLAPQLVLQSLDSRRHPHGIRQDGAQICIWKICPPSPWRRLGS.

The N-terminal stretch at 1–22 (MQTAYWMMVMMMVWITAPLSEG) is a signal peptide. A propeptide spanning residues 23–56 (GQLNDVIRGLVPDNLAPQLVLQSLDSRRHPHGIR) is cleaved from the precursor. A disulfide bridge connects residues C63 and C68. W65 is subject to D-tryptophan. P69, P70, and P72 each carry 4-hydroxyproline. The propeptide occupies 74 to 78 (RRLGS).

This sequence belongs to the conotoxin C superfamily. Consomatin family. In terms of tissue distribution, expressed by the venom duct.

It localises to the secreted. Functionally, moderately activates human somatostatin receptors (SSTR) with a preferential activation of SSTR1 and SSTR4. In vivo, does not cause behavioral changes in mice within a few minutes of intracranial injection, but causes a progressive loss of movement thereafter. Four to five hours after injection, mice recover, even with the highest dose tested. Shows antinociception and antihyperalgesia activities in two mouse models of acute pain, most probably by acting outside the central nervous system. The sequence is that of Consomatin Te1 from Conus terebra (Sea snail).